We begin with the raw amino-acid sequence, 137 residues long: uncharacterized protein (137 aa).

Helical transmembrane passes span 36-52 and 113-129; these read LAPP…PFVL and FYGY…IFCF.

Its subcellular location is the membrane. This is an uncharacterized protein from Saccharomyces cerevisiae (strain ATCC 204508 / S288c) (Baker's yeast).